We begin with the raw amino-acid sequence, 410 residues long: Translation initiation factor 2 subunit gamma (410 aa).

A tr-type G domain is found at 9–202; the sequence is QAEVNIGMVG…AIEEFIPTPE (194 aa). Positions 18–25 are G1; the sequence is GHVDHGKT. 4 residues coordinate Mg(2+): aspartate 21, threonine 25, glycine 46, and threonine 48. 21 to 26 lines the GTP pocket; the sequence is DHGKTT. Residues 46–50 are G2; sequence GITIK. Residues cysteine 61, cysteine 64, cysteine 73, and cysteine 76 each contribute to the Zn(2+) site. Residues 90–93 are G3; sequence DAPG. Residues 145-148 and 180-182 contribute to the GTP site; these read NKIE and SAL. Residues 145–148 form a G4 region; sequence NKIE. Residues 180 to 182 are G5; the sequence is SAL.

Belongs to the TRAFAC class translation factor GTPase superfamily. Classic translation factor GTPase family. EIF2G subfamily. In terms of assembly, heterotrimer composed of an alpha, a beta and a gamma chain. Mg(2+) is required as a cofactor.

The catalysed reaction is GTP + H2O = GDP + phosphate + H(+). Functionally, eIF-2 functions in the early steps of protein synthesis by forming a ternary complex with GTP and initiator tRNA. The sequence is that of Translation initiation factor 2 subunit gamma from Thermococcus onnurineus (strain NA1).